Here is a 329-residue protein sequence, read N- to C-terminus: (12E)-labda-8(17),12,14-triene synthase (329 aa).

Residues Asp-90 and Glu-95 each contribute to the Mg(2+) site. The DDXXXE motif motif lies at Asp-90–Glu-95. Arg-184 is a binding site for substrate. Asn-230 and Ser-234 together coordinate Mg(2+). Positions Asn-230–Glu-238 match the NXXXSXXXE motif motif. Residue Arg-237 participates in substrate binding. Position 238 (Glu-238) interacts with Mg(2+). Arg-316–Tyr-317 contacts substrate.

Belongs to the terpene synthase family. The cofactor is Mg(2+).

The enzyme catalyses (+)-copalyl diphosphate = (12E)-labda-8(17),12,14-triene + diphosphate. Its function is as follows. Involved in the biosynthesis of the mercapturic acid derivative diterpene cyslabdan A, a potentiator of the beta-lactam antibiotic imipenem. Catalyzes the conversion of (+)-copalyl diphosphate to yield labda-8(17),12(E),14-triene (biformene). The polypeptide is (12E)-labda-8(17),12,14-triene synthase (Streptomyces cyslabdanicus).